We begin with the raw amino-acid sequence, 356 residues long: D-alanine--D-alanine ligase (356 aa).

The ATP-grasp domain maps to 134-339 (KQLFEHRGLP…YPELITKLIE (206 aa)). Residue 167–222 (NDKLNYPVFVKPANLGSSVGISKCNNEAELKEGIKEAFQFDRKLVIEQGVNAREIE) participates in ATP binding. Residues aspartate 293, glutamate 306, and asparagine 308 each coordinate Mg(2+).

This sequence belongs to the D-alanine--D-alanine ligase family. The cofactor is Mg(2+). Mn(2+) is required as a cofactor.

It localises to the cytoplasm. It catalyses the reaction 2 D-alanine + ATP = D-alanyl-D-alanine + ADP + phosphate + H(+). Its pathway is cell wall biogenesis; peptidoglycan biosynthesis. In terms of biological role, cell wall formation. This is D-alanine--D-alanine ligase from Staphylococcus aureus (strain MSSA476).